The following is a 169-amino-acid chain: Large ribosomal subunit protein uL10 (169 aa).

Belongs to the universal ribosomal protein uL10 family. Part of the 50S ribosomal subunit.

This is Large ribosomal subunit protein uL10 (rplJ) from Deinococcus radiodurans (strain ATCC 13939 / DSM 20539 / JCM 16871 / CCUG 27074 / LMG 4051 / NBRC 15346 / NCIMB 9279 / VKM B-1422 / R1).